Consider the following 224-residue polypeptide: MAPSQAPSRDRAGQEDEDRWEARGDRKARKPLVEKKRRARINESLQELRLLLAGTEVQAKLENAEVLELTVRRVQGALRGRAREREQLQAEASERFAAGYIQCMHEVHTFVSTCQAIDATVSAELLNHLLESMPLREGSSFQDLLGDSLAGLPGGSGRSSWPPGGSPESPLSSPPGPGDDLCSDLEEIPEAELNRVPAEGPDLVSTSLGSLTAARRAQSVWRPW.

A disordered region spans residues 1–31 (MAPSQAPSRDRAGQEDEDRWEARGDRKARKP). Over residues 8 to 25 (SRDRAGQEDEDRWEARGD) the composition is skewed to basic and acidic residues. Positions 25-77 (DRKARKPLVEKKRRARINESLQELRLLLAGTEVQAKLENAEVLELTVRRVQGA) constitute a bHLH domain. Residues 96–129 (FAAGYIQCMHEVHTFVSTCQAIDATVSAELLNHL) enclose the Orange domain. The interval 146 to 209 (GDSLAGLPGG…GPDLVSTSLG (64 aa)) is disordered. Low complexity predominate over residues 158-171 (RSSWPPGGSPESPL). Positions 181–190 (LCSDLEEIPE) are enriched in acidic residues. The WRPW motif motif lies at 221-224 (WRPW).

In terms of assembly, transcription repression requires formation of a complex with a corepressor protein of the Groucho/TLE family. Interacts with HES1. In terms of tissue distribution, expressed in both undifferentiated and differentiated cells. High levels of expression are observed in several embryonic tissues including the nervous system, muscle and thymus. In the nervous system, initially expressed in the closing neural tube, then in the spinal cord, cranial and dorsal root ganglia, and brain neuroepithelium. Also expressed in epithelial cells of the embryonic respiratory, urinary and digestive systems. In the limb buds, expressed in skeletal muscle and presumptive tendons.

Its subcellular location is the nucleus. In terms of biological role, does not bind DNA itself but suppresses both HES1-mediated N box-dependent transcriptional repression and binding of HES1 to E box sequences. Also suppresses HES1-mediated inhibition of the heterodimer formed by ASCL1/MASH1 and TCF3/E47, allowing ASCL1 and TCF3 to up-regulate transcription in its presence. Promotes cell differentiation. In Mus musculus (Mouse), this protein is Transcription cofactor HES-6.